The following is a 336-amino-acid chain: Phospho-N-acetylmuramoyl-pentapeptide-transferase (336 aa).

10 helical membrane-spanning segments follow: residues 1 to 21 (MLPLTYVVKAFSIGLFFSLFL), 56 to 76 (IPTAGGIVFVFASVLAVLLLF), 78 to 98 (IQLWSTWFCIGTILLWGALGW), 124 to 144 (CLAAGVVLPIMFAYKESFLSF), 148 to 168 (FLGIVSLPHHWWSYLLSFAIA), 184 to 204 (GLDGLAAGAMVIACLGMLVVA), 210 to 230 (PWAFICCVLLATLAGSCLGFL), 239 to 259 (VFMGDTGSLFLGAMLGMCAVL), 264 to 284 (FLLLFMGGIFVLESLSVIVQV), and 314 to 334 (VVRNFLIVELICVVVGIIAVF).

It belongs to the glycosyltransferase 4 family. MraY subfamily. It depends on Mg(2+) as a cofactor.

The protein resides in the cell inner membrane. The catalysed reaction is UDP-N-acetyl-alpha-D-muramoyl-L-alanyl-gamma-D-glutamyl-meso-2,6-diaminopimeloyl-D-alanyl-D-alanine + di-trans,octa-cis-undecaprenyl phosphate = di-trans,octa-cis-undecaprenyl diphospho-N-acetyl-alpha-D-muramoyl-L-alanyl-D-glutamyl-meso-2,6-diaminopimeloyl-D-alanyl-D-alanine + UMP. It participates in cell wall biogenesis; peptidoglycan biosynthesis. Functionally, catalyzes the initial step of the lipid cycle reactions in the biosynthesis of the cell wall peptidoglycan: transfers peptidoglycan precursor phospho-MurNAc-pentapeptide from UDP-MurNAc-pentapeptide onto the lipid carrier undecaprenyl phosphate, yielding undecaprenyl-pyrophosphoryl-MurNAc-pentapeptide, known as lipid I. In Chlamydia trachomatis serovar L2b (strain UCH-1/proctitis), this protein is Phospho-N-acetylmuramoyl-pentapeptide-transferase.